We begin with the raw amino-acid sequence, 848 residues long: Phosphatidate phosphatase LPIN3 (848 aa).

Residues 1–108 (MNYVGQLAET…VPPRLCTSPI (108 aa)) form an N-LIP region. 3 disordered regions span residues 97–233 (EDVP…SPLR), 271–298 (PEEPSPSSSPSEAGVDTLSPPVLHPGVR), and 314–373 (AVDS…NQHL). The Nuclear localization signal signature appears at 135-144 (GRRKRRRRRK). Positions 135–146 (GRRKRRRRRKPR) are enriched in basic residues. Over residues 151-164 (DAVDSSSEELEAGA) the composition is skewed to acidic residues. Residues serine 155 and serine 156 each carry the phosphoserine modification. Residues 165-191 (ESELTLLEKPTPESPSAQEAEEPSSQP) are compositionally biased toward low complexity. Position 218 is a phosphoserine (serine 218). The span at 271 to 282 (PEEPSPSSSPSE) shows a compositional bias: low complexity. A compositionally biased stretch (polar residues) spans 342–358 (KSWSWTTPESHTPSGHP). The residue at position 460 (serine 460) is a Phosphoserine. Residues 536–556 (EEHSSQREKAATRKQQGEKTE) are compositionally biased toward basic and acidic residues. Residues 536 to 568 (EEHSSQREKAATRKQQGEKTEVLSSDDDVPDSP) form a disordered region. Residues 587–789 (YKKSLRLSSD…RIFTVNPRGE (203 aa)) are C-LIP. A DXDXT motif motif is present at residues 641–645 (DIDGT). The LXXIL motif motif lies at 652–656 (LGHIL).

It belongs to the lipin family. The cofactor is Mg(2+). As to expression, significant expression in intestine and other regions of the gastrointestinal tract.

The protein localises to the nucleus. It catalyses the reaction a 1,2-diacyl-sn-glycero-3-phosphate + H2O = a 1,2-diacyl-sn-glycerol + phosphate. Its activity is regulated as follows. Inhibited by N-ethylmaleimide. Functionally, magnesium-dependent phosphatidate phosphatase enzyme which catalyzes the conversion of phosphatidic acid to diacylglycerol during triglyceride, phosphatidylcholine and phosphatidylethanolamine biosynthesis therefore regulates fatty acid metabolism. The protein is Phosphatidate phosphatase LPIN3 of Mus musculus (Mouse).